A 165-amino-acid polypeptide reads, in one-letter code: Histone H1 (165 aa).

The segment at 1-165 (GKQSTSKSVT…KKATKGSKKN (165 aa)) is disordered. Over residues 9–18 (VTREKKDVKK) the composition is skewed to basic and acidic residues. The segment covering 20 to 31 (VAPKKAIKKVTK) has biased composition (basic residues). The segment covering 32–41 (KSTTPVKTSK) has biased composition (low complexity). Residues T48 and T54 each carry the phosphothreonine modification. The span at 68-89 (TMKESVSDAKKTVHKSAGDKKL) shows a compositional bias: basic and acidic residues. Residue S83 is modified to Phosphoserine. Positions 103–117 (KIVHPAKKAAAKPKT) are enriched in basic residues. Phosphothreonine is present on T117. Positions 118-157 (AKKEVKKDTKPVKKDAKKDTKPVKKDAKKDTKPAKKDTKK) are enriched in basic and acidic residues.

Cell-growth/division-associated phosphorylation by a CDC2-like kinase. Is additionally phosphorylated on either Ser-33, Thr-34 or Thr-35, and on either Thr-39 or Ser-40.

Its subcellular location is the nucleus. The protein localises to the chromosome. In terms of biological role, histones H1 are necessary for the condensation of nucleosome chains into higher-order structures. The chain is Histone H1 (HHO) from Tetrahymena pyriformis.